The following is a 259-amino-acid chain: PF03932 family protein CutC (259 aa).

It belongs to the CutC family. In terms of assembly, homodimer.

The protein localises to the cytoplasm. This chain is PF03932 family protein CutC, found in Salmonella typhi.